The following is a 158-amino-acid chain: SUMO-conjugating enzyme UBC9 (158 aa).

The 154-residue stretch at 4–157 (IALSRLAQER…VRAQAKKFAP (154 aa)) folds into the UBC core domain. Residues 13–18 (RKAWRK) are interaction with SUMO1. The active-site Glycyl thioester intermediate is cysteine 93.

Belongs to the ubiquitin-conjugating enzyme family. In terms of assembly, interacts with SOX9.

It is found in the nucleus. The protein localises to the cytoplasm. Its pathway is protein modification; protein sumoylation. Its function is as follows. Accepts the ubiquitin-like proteins SUMO1, SUMO2 and SUMO3 from the UBLE1A-UBLE1B E1 complex and catalyzes their covalent attachment to other proteins with the help of an E3 ligase such as RANBP2 or CBX4. Essential for nuclear architecture and chromosome segregation. The chain is SUMO-conjugating enzyme UBC9 (UBE2I) from Gallus gallus (Chicken).